The primary structure comprises 280 residues: 4-diphosphocytidyl-2-C-methyl-D-erythritol kinase (280 aa).

Residue Lys8 is part of the active site. 91–101 (PVSAGLAGGST) lines the ATP pocket. The active site involves Asp133.

The protein belongs to the GHMP kinase family. IspE subfamily.

It catalyses the reaction 4-CDP-2-C-methyl-D-erythritol + ATP = 4-CDP-2-C-methyl-D-erythritol 2-phosphate + ADP + H(+). It functions in the pathway isoprenoid biosynthesis; isopentenyl diphosphate biosynthesis via DXP pathway; isopentenyl diphosphate from 1-deoxy-D-xylulose 5-phosphate: step 3/6. Its function is as follows. Catalyzes the phosphorylation of the position 2 hydroxy group of 4-diphosphocytidyl-2C-methyl-D-erythritol. The protein is 4-diphosphocytidyl-2-C-methyl-D-erythritol kinase of Clostridium beijerinckii (strain ATCC 51743 / NCIMB 8052) (Clostridium acetobutylicum).